The sequence spans 775 residues: Thiamine repressible genes regulatory protein thi1 (775 aa).

The zn(2)-C6 fungal-type DNA-binding region spans 39-65 (CKHCRQKKIKCNGGQPCISCKTLNIEC). Serine 208 carries the phosphoserine modification. 2 disordered regions span residues 676–695 (LTGE…FQPF) and 754–775 (NVSE…EKNG).

It localises to the nucleus. Functionally, transcription factor that activates the nmt1 promoter. Regulation of thiamine repressible genes. Positively regulates conjugation during meiosis. In Schizosaccharomyces pombe (strain 972 / ATCC 24843) (Fission yeast), this protein is Thiamine repressible genes regulatory protein thi1 (thi1).